The chain runs to 233 residues: Nucleoside diphosphate kinase 2, chloroplastic (233 aa).

The N-terminal 67 residues, 1–67 (MEAMSGLSSP…LISHSLPRKK (67 aa)), are a transit peptide targeting the chloroplast. ATP is bound by residues Lys-93, Phe-141, Arg-169, Thr-175, Arg-186, and Asn-196. Residue His-199 is the Pros-phosphohistidine intermediate of the active site.

Belongs to the NDK family. Mg(2+) is required as a cofactor.

The protein localises to the plastid. Its subcellular location is the chloroplast. The enzyme catalyses a 2'-deoxyribonucleoside 5'-diphosphate + ATP = a 2'-deoxyribonucleoside 5'-triphosphate + ADP. The catalysed reaction is a ribonucleoside 5'-diphosphate + ATP = a ribonucleoside 5'-triphosphate + ADP. Major role in the synthesis of nucleoside triphosphates other than ATP. The ATP gamma phosphate is transferred to the NDP beta phosphate via a ping-pong mechanism, using a phosphorylated active-site intermediate. This chain is Nucleoside diphosphate kinase 2, chloroplastic (NDPK2), found in Spinacia oleracea (Spinach).